Consider the following 640-residue polypeptide: MNGPPTFTQYRINKFSGNGATHKIRELLNFNDEKKWKQFSSRRLELIDKFQLSQYKASEQDQNIKQIATILRTEFGYPVSCSKEFEKLVTAAVQSVRRNRKRSKKRYALSIANGSGGNVNNSISSNSTSDDEISPSIYQRSNSDFLPSSNYAADFQFSNKFQPLMSHQSHNGTIFPTVGTQNDSSPSVTSTQQKYNDIVTMLVHDLVTNVVPLSEQALKDPYTGPNLSHFATSSLSQQPNITTNIPIDSTVPFFLREKLLLQIQRSRTCQDISQAAGSIDIYANLEILGEMSIRMSIAFVIERFFSNLVSSSMKYITAKTCSPENLALLSQRLFGAATRHNLSHFPAAQVQLRLLYLVIGGIVKDFGFDPTLYPLSEIIHHIVMVQYPLASSCASEPPSSSPNKRVKRSPPVVSSDVMLNNNNTLSNRATLLTTLPMKPQSANKDVNRRVIIRFNDREQAFTFHQLSNGPPTVSEVLENCKNLFNIINKNKNFGIFHNDNLLNDESLAKLFDSFSTSEIHLVIKDISTIPLQDAKIPVPITLPKMSCIGENPSMPSIPLVPQEKDDPKKSSLTAFDNILNRISKSPMNEENSNTTLNTGTSTSNTNNNDHNESVPAPYVTKNKNSFQNGNLPQPVFQPLL.

Residues 118–128 (NVNNSISSNST) are compositionally biased toward low complexity. Residues 118-139 (NVNNSISSNSTSDDEISPSIYQ) are disordered. Position 409 is a phosphoserine (Ser409). The segment at 580–640 (NRISKSPMNE…LPQPVFQPLL (61 aa)) is disordered. Positions 588-608 (NEENSNTTLNTGTSTSNTNNN) are enriched in low complexity. The segment covering 621–631 (KNKNSFQNGNL) has biased composition (polar residues).

It belongs to the VHR1 family.

The protein localises to the cytoplasm. It is found in the nucleus. Transcription factor that binds to the VHRE consensus sequence in promoters of VHT1 and BIO5, and regulates their biotin-dependent expression. This chain is Transcription factor VHR1 (VHR1), found in Saccharomyces cerevisiae (strain ATCC 204508 / S288c) (Baker's yeast).